Here is a 272-residue protein sequence, read N- to C-terminus: Nitrogenase iron protein (272 aa).

Position 8 to 15 (8 to 15 (GKGGIGKS)) interacts with ATP. Cys94 provides a ligand contact to [4Fe-4S] cluster. Arg97 bears the ADP-ribosylarginine; by dinitrogenase reductase ADP-ribosyltransferase mark. Residue Cys129 participates in [4Fe-4S] cluster binding.

It belongs to the NifH/BchL/ChlL family. As to quaternary structure, homodimer. The cofactor is [4Fe-4S] cluster. In terms of processing, the reversible ADP-ribosylation of Arg-97 inactivates the nitrogenase reductase and regulates nitrogenase activity.

The enzyme catalyses N2 + 8 reduced [2Fe-2S]-[ferredoxin] + 16 ATP + 16 H2O = H2 + 8 oxidized [2Fe-2S]-[ferredoxin] + 2 NH4(+) + 16 ADP + 16 phosphate + 6 H(+). In terms of biological role, the key enzymatic reactions in nitrogen fixation are catalyzed by the nitrogenase complex, which has 2 components: the iron protein and the molybdenum-iron protein. The protein is Nitrogenase iron protein of Desulforamulus reducens (strain ATCC BAA-1160 / DSM 100696 / MI-1) (Desulfotomaculum reducens).